A 349-amino-acid polypeptide reads, in one-letter code: GDP-mannose:glycolipid 4-beta-D-mannosyltransferase (349 aa).

An N-terminal signal peptide occupies residues 1–14 (MSASASLPVTRAAA).

It belongs to the glycosyltransferase 94 family.

The protein localises to the cell inner membrane. The catalysed reaction is beta-D-GlcA-(1-&gt;2)-alpha-D-Man-(1-&gt;3)-beta-D-Glc-(1-&gt;4)-alpha-D-Glc-di-trans,octa-cis-undecaprenyl diphosphate + GDP-alpha-D-mannose = beta-D-Man-(1-&gt;4)-beta-D-GlcA-(1-&gt;2)-alpha-D-Man-(1-&gt;3)-beta-D-Glc-(1-&gt;4)-alpha-D-Glc-di-trans,octa-cis-undecaprenyl diphosphate + GDP + H(+). Its pathway is glycan biosynthesis; xanthan biosynthesis. Nonprocessive beta-mannosyltransferase that catalyzes the transfer of a mannose residue from GDP-mannose to glucuronic acid-beta-1,2-mannose-alpha-1,3-glucose-beta-1,4-glucose-PP-polyisoprenyl to form the lipid-linked pentasaccharide repeating unit of xanthan, Man-GlcA-Man-Glc(2)-PP-Pol. Is involved in the biosynthesis of the exopolysaccharide xanthan. To a lesser extent, can also use ADP-Man and even GDP-Glc as sugar donor substrates in vitro. Is unable to transfer a Man residue to the free-tetrasaccharide GlcA-Man-Glc(2) used as an acceptor, which indicates that the diphosphate group and the lipid moiety in the acceptor substrate are of major importance for acceptor binding and catalysis. The chain is GDP-mannose:glycolipid 4-beta-D-mannosyltransferase (gumI) from Xanthomonas campestris pv. campestris.